We begin with the raw amino-acid sequence, 122 residues long: Large ribosomal subunit protein bL12 (122 aa).

It belongs to the bacterial ribosomal protein bL12 family. As to quaternary structure, homodimer. Part of the ribosomal stalk of the 50S ribosomal subunit. Forms a multimeric L10(L12)X complex, where L10 forms an elongated spine to which 2 to 4 L12 dimers bind in a sequential fashion. Binds GTP-bound translation factors.

Functionally, forms part of the ribosomal stalk which helps the ribosome interact with GTP-bound translation factors. Is thus essential for accurate translation. This Staphylococcus aureus (strain Newman) protein is Large ribosomal subunit protein bL12.